Here is a 133-residue protein sequence, read N- to C-terminus: Small ribosomal subunit protein uS8 (133 aa).

Belongs to the universal ribosomal protein uS8 family. As to quaternary structure, part of the 30S ribosomal subunit. Contacts proteins S5 and S12.

One of the primary rRNA binding proteins, it binds directly to 16S rRNA central domain where it helps coordinate assembly of the platform of the 30S subunit. The polypeptide is Small ribosomal subunit protein uS8 (Rhodopirellula baltica (strain DSM 10527 / NCIMB 13988 / SH1)).